Reading from the N-terminus, the 795-residue chain is Copper-exporting P-type ATPase (795 aa).

HMA domains lie at 5 to 70 (QNAT…YDVV) and 72 to 138 (DKAE…YDAQ). The Cu(+) site is built by cysteine 16, cysteine 19, cysteine 83, and cysteine 86. Helical transmembrane passes span 161 to 181 (LMISTILSLPLLMTMLVHLFN), 187 to 207 (ILMNPWFQFILATPIQFIIGW), 224 to 244 (MDVLVALGTSAAYFYSIYEMI), 256 to 276 (LYFETSAVLITLILFGKYLEA), 412 to 432 (YFVPIVIAIALLTFLIWITLV), and 440 to 460 (ALVAAISVLVIACPCALGLAT). Aspartate 496 (4-aspartylphosphate intermediate) is an active-site residue. Mg(2+)-binding residues include aspartate 690 and aspartate 694. The next 2 helical transmembrane spans lie at 747 to 764 (NLFWAFGYNIAGIPIAAM) and 770 to 788 (WIAGAAMALSSVSVVSNAL).

This sequence belongs to the cation transport ATPase (P-type) (TC 3.A.3) family. Type IB subfamily.

Its subcellular location is the cell membrane. The enzyme catalyses Cu(+)(in) + ATP + H2O = Cu(+)(out) + ADP + phosphate + H(+). Its function is as follows. Involved in copper export. In Staphylococcus haemolyticus (strain JCSC1435), this protein is Copper-exporting P-type ATPase (copA).